The following is a 234-amino-acid chain: Large ribosomal subunit protein uL1 (234 aa).

It belongs to the universal ribosomal protein uL1 family. In terms of assembly, part of the 50S ribosomal subunit.

Its function is as follows. Binds directly to 23S rRNA. The L1 stalk is quite mobile in the ribosome, and is involved in E site tRNA release. In terms of biological role, protein L1 is also a translational repressor protein, it controls the translation of the L11 operon by binding to its mRNA. The chain is Large ribosomal subunit protein uL1 from Salmonella gallinarum (strain 287/91 / NCTC 13346).